The primary structure comprises 141 residues: Transmembrane protein 216 (141 aa).

4 helical membrane passes run 15–35 (ILFFLNGWYYATYFLLELFIF), 49–69 (LVLDVVMLFLYLGVEVIRLFF), 82–102 (LGISVALTFPSTMMASYYLLL), and 115–135 (SILLFFCGSELLLEVLTLTAF).

In terms of assembly, part of the tectonic-like complex (also named B9 complex). Interacts with TMEM107.

It localises to the membrane. The protein localises to the cytoplasm. It is found in the cytoskeleton. The protein resides in the cilium basal body. Functionally, part of the tectonic-like complex which is required for tissue-specific ciliogenesis and may regulate ciliary membrane composition. The polypeptide is Transmembrane protein 216 (TMEM216) (Bos taurus (Bovine)).